Here is a 613-residue protein sequence, read N- to C-terminus: ADP-ribosylation factor-binding protein GGA2 (613 aa).

A VHS domain is found at 33 to 163; it reads ATDPSMSEQD…MLKKQGIIKQ (131 aa). The GAT domain maps to 188 to 315; sequence DEEKSKLLTR…GVLLYKQVME (128 aa). Residues 316-483 form a unstructured hinge region; the sequence is GRVTFGNRVT…VFVPLESVKP (168 aa). 2 disordered regions span residues 389-414 and 435-466; these read GQNCCEEKRNPSSSTLPGGGVQNPSA and SQKSVPKEVPPGTKSSPGWSWEAGPLAPSPSS. Over residues 399-414 the composition is skewed to polar residues; the sequence is PSSSTLPGGGVQNPSA. The residue at position 400 (Ser-400) is a Phosphoserine. A GAE domain is found at 484–605; it reads SSLPPLIVYD…SEVGEVKDFP (122 aa).

It belongs to the GGA protein family. Monomer. Interacts with NECAP1, TSG101, UBC and AFTPH/aftiphilin. Interacts with CNST. Interacts with GGA1 and GGA3. Binds to clathrin and activated ARFs, such as ARF1, ARF5 and ARF6. Binds RABEP1 and RABGEF1. Interacts with the type-I membrane proteins LRP3, M6PR/CD-MPR, IGF2R/CI-MPR and BACE1. Interacts (via N-terminal VHS domain) with SORL1/sorLA and SORT1 (via C-terminal cytosolic domain). Binds the accessory proteins CCDC91, P200, SYNRG, EPN4 and NECAP2. Interacts with ADRA2B. Interacts (via VHS domain) with PIK4B; the interaction is important for PIK4B location at the Golgi apparatus membrane. Post-translationally, ubiquitinated. In terms of tissue distribution, ubiquitously expressed.

Its subcellular location is the golgi apparatus. The protein localises to the trans-Golgi network membrane. The protein resides in the endosome membrane. It localises to the early endosome membrane. Plays a role in protein sorting and trafficking between the trans-Golgi network (TGN) and endosomes. Mediates the ARF-dependent recruitment of clathrin to the TGN and binds ubiquitinated proteins and membrane cargo molecules with a cytosolic acidic cluster-dileucine (DXXLL) motif. Mediates export of the GPCR receptor ADRA2B to the cell surface. Regulates retrograde transport of phosphorylated form of BACE1 from endosomes to the trans-Golgi network. This chain is ADP-ribosylation factor-binding protein GGA2 (GGA2), found in Homo sapiens (Human).